The sequence spans 242 residues: ATP-dependent dethiobiotin synthetase BioD (242 aa).

15-20 provides a ligand contact to ATP; it reads DVGKTV. Threonine 19 provides a ligand contact to Mg(2+). The active site involves lysine 40. A substrate-binding site is contributed by serine 44. Glutamate 117 is a binding site for Mg(2+). ATP is bound by residues 117-120, 178-179, and 208-210; these read EGAG, NQ, and PYS.

Belongs to the dethiobiotin synthetase family. Homodimer. Mg(2+) is required as a cofactor.

It is found in the cytoplasm. The catalysed reaction is (7R,8S)-7,8-diammoniononanoate + CO2 + ATP = (4R,5S)-dethiobiotin + ADP + phosphate + 3 H(+). It participates in cofactor biosynthesis; biotin biosynthesis; biotin from 7,8-diaminononanoate: step 1/2. Catalyzes a mechanistically unusual reaction, the ATP-dependent insertion of CO2 between the N7 and N8 nitrogen atoms of 7,8-diaminopelargonic acid (DAPA, also called 7,8-diammoniononanoate) to form a ureido ring. The sequence is that of ATP-dependent dethiobiotin synthetase BioD from Halalkalibacterium halodurans (strain ATCC BAA-125 / DSM 18197 / FERM 7344 / JCM 9153 / C-125) (Bacillus halodurans).